Consider the following 207-residue polypeptide: Myosin light chain 6B (207 aa).

Residues 1 to 50 (MPPKKDAPVKKPAGPSISKPAAKSTPGTPLAKAKAEPAAPQAPAKSQEPP) are disordered. Low complexity predominate over residues 36–50 (EPAAPQAPAKSQEPP). 3 consecutive EF-hand domains span residues 63 to 98 (DQLEEFREAFELFDRVGDGKILYSQCGDLMRALGQN), 140 to 175 (GTYEDYLEGLRVFDKEGNGKVMGAELRHVLTTLGEK), and 175 to 207 (KMTEEEVETVLAGHEDSNGCINYEAFLKHILSL).

As to quaternary structure, myosin is a hexamer of 2 heavy chains and 4 light chains.

Regulatory light chain of myosin. Does not bind calcium. This Mus musculus (Mouse) protein is Myosin light chain 6B.